A 350-amino-acid polypeptide reads, in one-letter code: Phenylalanine--tRNA ligase alpha subunit (350 aa).

Mg(2+) is bound at residue Glu271.

Belongs to the class-II aminoacyl-tRNA synthetase family. Phe-tRNA synthetase alpha subunit type 1 subfamily. As to quaternary structure, tetramer of two alpha and two beta subunits. Requires Mg(2+) as cofactor.

It localises to the cytoplasm. It carries out the reaction tRNA(Phe) + L-phenylalanine + ATP = L-phenylalanyl-tRNA(Phe) + AMP + diphosphate + H(+). The polypeptide is Phenylalanine--tRNA ligase alpha subunit (Verminephrobacter eiseniae (strain EF01-2)).